A 789-amino-acid chain; its full sequence is Isoamylase SU1, chloroplastic (789 aa).

The N-terminal 44 residues, 1-44, are a transit peptide targeting the chloroplast; that stretch reads MAQQLPCVSSPRPLLAVPAGRWRAGVRGRPNVAGLGRGRLSLHA. Residue Asp417 is the Nucleophile of the active site. Glu473 functions as the Proton donor in the catalytic mechanism.

The protein belongs to the glycosyl hydrolase 13 family.

It localises to the plastid. Its subcellular location is the chloroplast. The enzyme catalyses Hydrolysis of (1-&gt;6)-alpha-D-glucosidic branch linkages in glycogen, amylopectin and their beta-limit dextrins.. The protein operates within glycan biosynthesis; starch biosynthesis. Functionally, isoamylase starch-debranching enzyme involved in amylopectin biosynthesis in endosperm. Functions by removing excess branches or improper branches that interfere with the formation of double helices of the cluster chains of amylopectin and crystallization of starch. The sequence is that of Isoamylase SU1, chloroplastic from Zea mays (Maize).